The chain runs to 122 residues: Ferredoxin (122 aa).

Residues 1 to 33 (MSHDRRLTVGSLLPNQPRPVAVPKAPSVVQPSK) form a disordered region. The tract at residues 8–14 (TVGSLLP) is targeting peptide. A 2Fe-2S ferredoxin-type domain is found at 40 to 122 (AIIRLEQNGR…FRLACQANME (83 aa)). [2Fe-2S] cluster-binding residues include C75, C80, C83, and C117.

This sequence belongs to the 2Fe2S plant-type ferredoxin family. [2Fe-2S] cluster serves as cofactor.

The protein localises to the encapsulin nanocompartment. In terms of biological role, cargo protein of a type 1 encapsulin nanocompartment. An iron-binding protein probably involved in iron mineralization in the encapsulin nanocompartment. 2 different cargo proteins have been identified (IMEF and Fer); when both are expressed in E.coli with the shell protein only IMEF is detected within the nanocompartment. E.coli expressing all 3 genes stores the largest amount of iron and is protected from Fe/H2O2-induced oxidative stress. The chain is Ferredoxin from Bacillus thermotolerans (Quasibacillus thermotolerans).